The chain runs to 115 residues: Basic leucine zipper transcriptional factor ATF-like (115 aa).

The tract at residues 1–60 is disordered; the sequence is MQQESDRNEQGYSSSPPSSNKQDSSDDTKKNHRREKNRIAAQKSRQRQTEKADSLHIESE. Low complexity predominate over residues 13 to 22; it reads SSSPPSSNKQ. In terms of domain architecture, bZIP spans 27–90; sequence DTKKNHRREK…KYLTCVLSTH (64 aa). Residues 29-51 are basic motif; the sequence is KKNHRREKNRIAAQKSRQRQTEK. Positions 47-60 are enriched in basic and acidic residues; the sequence is RQTEKADSLHIESE. Positions 55–83 are leucine-zipper; sequence LHIESENLERLNSALRGEISGLREELKYL.

Belongs to the bZIP family.

The protein resides in the nucleus. The protein localises to the cytoplasm. Its function is as follows. AP-1 family transcription factor that controls the differentiation of lineage-specific cells in the immune system: specifically mediates the differentiation of T-helper 17 cells (Th17), follicular T-helper cells (TfH), CD8(+) dendritic cells and class-switch recombination (CSR) in B-cells. This is Basic leucine zipper transcriptional factor ATF-like (batf) from Xenopus laevis (African clawed frog).